Reading from the N-terminus, the 132-residue chain is Small ribosomal subunit protein uS8 (132 aa).

Belongs to the universal ribosomal protein uS8 family. Part of the 30S ribosomal subunit. Contacts proteins S5 and S12.

In terms of biological role, one of the primary rRNA binding proteins, it binds directly to 16S rRNA central domain where it helps coordinate assembly of the platform of the 30S subunit. The polypeptide is Small ribosomal subunit protein uS8 (Bacillus pumilus (strain SAFR-032)).